The primary structure comprises 360 residues: Phospho-N-acetylmuramoyl-pentapeptide-transferase (360 aa).

A run of 10 helical transmembrane segments spans residues 27–47 (ILSV…MIRM), 73–93 (TMGG…WGDL), 97–117 (FVWI…VDDW), 132–152 (WKYL…FFTA), 164–184 (FFKS…YFVI), 199–219 (GLAI…AYAG), 236–256 (AGEL…FLWF), 263–283 (VFMG…MAVI), 288–308 (IVLF…MLQV), and 337–357 (KIIV…LATL).

Belongs to the glycosyltransferase 4 family. MraY subfamily. Mg(2+) is required as a cofactor.

It localises to the cell inner membrane. The catalysed reaction is UDP-N-acetyl-alpha-D-muramoyl-L-alanyl-gamma-D-glutamyl-meso-2,6-diaminopimeloyl-D-alanyl-D-alanine + di-trans,octa-cis-undecaprenyl phosphate = di-trans,octa-cis-undecaprenyl diphospho-N-acetyl-alpha-D-muramoyl-L-alanyl-D-glutamyl-meso-2,6-diaminopimeloyl-D-alanyl-D-alanine + UMP. The protein operates within cell wall biogenesis; peptidoglycan biosynthesis. Its function is as follows. Catalyzes the initial step of the lipid cycle reactions in the biosynthesis of the cell wall peptidoglycan: transfers peptidoglycan precursor phospho-MurNAc-pentapeptide from UDP-MurNAc-pentapeptide onto the lipid carrier undecaprenyl phosphate, yielding undecaprenyl-pyrophosphoryl-MurNAc-pentapeptide, known as lipid I. This Alcanivorax borkumensis (strain ATCC 700651 / DSM 11573 / NCIMB 13689 / SK2) protein is Phospho-N-acetylmuramoyl-pentapeptide-transferase.